The chain runs to 385 residues: tRNA-specific 2-thiouridylase MnmA (385 aa).

ATP is bound by residues 18-25 (AMSGGVDS) and Leu44. Cys112 (nucleophile) is an active-site residue. A disulfide bond links Cys112 and Cys209. Gly136 serves as a coordination point for ATP. An interaction with tRNA region spans residues 159-161 (RDQ). Catalysis depends on Cys209, which acts as the Cysteine persulfide intermediate.

This sequence belongs to the MnmA/TRMU family.

It is found in the cytoplasm. It carries out the reaction S-sulfanyl-L-cysteinyl-[protein] + uridine(34) in tRNA + AH2 + ATP = 2-thiouridine(34) in tRNA + L-cysteinyl-[protein] + A + AMP + diphosphate + H(+). Catalyzes the 2-thiolation of uridine at the wobble position (U34) of tRNA, leading to the formation of s(2)U34. The protein is tRNA-specific 2-thiouridylase MnmA of Methylorubrum populi (strain ATCC BAA-705 / NCIMB 13946 / BJ001) (Methylobacterium populi).